Consider the following 296-residue polypeptide: Aquaporin NIP1-1 (296 aa).

Methionine 1 bears the N-acetylmethionine mark. Helical transmembrane passes span 57–77 (LIAEFLGTYFLVFTGCASVVV) and 84–104 (VVTLPGIAIVWGLTIMVLIYS). The NPA 1 signature appears at 114-116 (NPA). The next 3 helical transmembrane spans lie at 136–156 (VISQVIGSTLAAATLRLLFGL), 180–200 (AFTMEFIVTFYLMFIISGVAT), and 205–225 (IGELAGLAIGSTVLLNVLIAA). An NPA 2 motif is present at residues 233-235 (NPG). A helical membrane pass occupies residues 249-269 (GIWIYLVAPTLGAIAGAWVYN). Serine 286 is modified (phosphoserine).

This sequence belongs to the MIP/aquaporin (TC 1.A.8) family. NIP (TC 1.A.8.12) subfamily. As to expression, expressed in roots.

Its subcellular location is the membrane. Its function is as follows. Water channel probably required to promote glycerol permeability and water transport across cell membranes. The sequence is that of Aquaporin NIP1-1 (NIP1-1) from Arabidopsis thaliana (Mouse-ear cress).